The following is a 311-amino-acid chain: Insulin-like growth factor-binding protein 2 (311 aa).

The N-terminal stretch at Met1–Pro36 is a signal peptide. An IGFBP N-terminal domain is found at Val38–Pro120. Disulfide bonds link Cys42-Cys70, Cys45-Cys72, Cys53-Cys73, Cys61-Cys76, Cys84-Cys97, and Cys91-Cys117. Disordered stretches follow at residues Gln112–Thr168 and Gly188–Thr210. A Thyroglobulin type-1 domain is found at Arg209 to Cys291. 3 disulfide bridges follow: Cys212-Cys246, Cys257-Cys268, and Cys270-Cys291. Residues Arg286–Asp288 carry the Cell attachment site motif.

As to quaternary structure, binds IGF2 more than IGF1.

The protein localises to the secreted. Its function is as follows. Inhibits IGF-mediated growth and developmental rates. IGF-binding proteins prolong the half-life of the IGFs and have been shown to either inhibit or stimulate the growth promoting effects of the IGFs on cell culture. They alter the interaction of IGFs with their cell surface receptors. The protein is Insulin-like growth factor-binding protein 2 (IGFBP2) of Gallus gallus (Chicken).